A 143-amino-acid chain; its full sequence is MKLHELTPSEGSRFSRRRIGRGDSSGQGKTSGRGQKGQKARGKVRVGFEGGQMPLYRRIPKRGFTNINRKEYAVVNLDGLNRFDDGAEVTPESLKEAGLVKKSSAVKVLGNGKLNKKLTVKASKFSATAVAAIEAAGGKTEVI.

Positions 1–47 are disordered; sequence MKLHELTPSEGSRFSRRRIGRGDSSGQGKTSGRGQKGQKARGKVRVG. Over residues 23 to 35 the composition is skewed to gly residues; it reads DSSGQGKTSGRGQ.

This sequence belongs to the universal ribosomal protein uL15 family. Part of the 50S ribosomal subunit.

Its function is as follows. Binds to the 23S rRNA. This Lactiplantibacillus plantarum (strain ATCC BAA-793 / NCIMB 8826 / WCFS1) (Lactobacillus plantarum) protein is Large ribosomal subunit protein uL15.